Here is a 539-residue protein sequence, read N- to C-terminus: Chitin deacetylase 1 (539 aa).

An N-terminal signal peptide occupies residues 1-23 (MARYARVATLAACLLFACALADG). The region spanning 42–104 (QELCKDKDAG…WKDAVKNCKL (63 aa)) is the Chitin-binding type-2 domain. 6 disulfide bridges follow: C80–C93, C122–C134, C129–C147, C141–C156, C168–C180, and C173–C178. One can recognise an LDL-receptor class A domain in the interval 121 to 157 (LCQDGFLACGDSTCIERGLFCNGEKDCGDGSDENSCD). Position 206 (D206) interacts with Zn(2+). 5 cysteine pairs are disulfide-bonded: C230-C489, C354-C361, C391-C397, C497-C520, and C503-C523. N244 carries N-linked (GlcNAc...) asparagine glycosylation. 2 residues coordinate Zn(2+): H261 and H265. N296 carries an N-linked (GlcNAc...) asparagine glycan.

The protein belongs to the carbohydrate esterase 4 (CE4) family. Interacts with CPAP3-A1. Zn(2+) serves as cofactor. Highly expressed in epidermis and head. Moderate expression levels in fat body, Malpighian tubule, testis and midgut. Low expression in silk gland and ovary.

Its subcellular location is the secreted. It catalyses the reaction [(1-&gt;4)-N-acetyl-beta-D-glucosaminyl](n) + n H2O = chitosan + n acetate. Its activity is regulated as follows. Binding to the accessory protein CPAP3-A1 is essential for chitinase activity. Functionally, hydrolyzes the N-acetamido groups of N-acetyl-D-glucosamine residues in chitin. This is Chitin deacetylase 1 from Bombyx mori (Silk moth).